The chain runs to 245 residues: Gem-associated protein 2 (245 aa).

Belongs to the gemin-2 family. Component of the core survival motor neuron (SMN) complex composed of Smn, Gem2, Gem3, rig/Gem5 and one of 3 almost identical Gem4 paralogs encoded by Glos/Gem4a, Gem4b or Gem4c. Part of a minimal SMN complex composed of Smn and Gem2 only; this complex is active in UsnRNP assembly. The SMN complex associates with the entire set of spliceosomal snRNP Sm proteins, SmB, SmD1, SmD2, SmD3, SmE, SmF and SmG, and with the snRNP-specific proteins snRNP-U1-70K, U2A, snf/U1A and U5-116KD. As to expression, expressed in nurse cells and oocytes.

It localises to the cytoplasm. The protein localises to the U-body. Its function is as follows. Component of the survival motor neuron (SMN) complex that catalyzes the assembly of small nuclear ribonucleoproteins (snRNPs), the building blocks of the spliceosome, and thereby plays an important role in the splicing of cellular pre-mRNAs. Most spliceosomal snRNPs contain a common set of Sm proteins SNRPB, SNRPD1, SNRPD2, SNRPD3, SNRPE, SNRPF and SNRPG that assemble in a heptameric protein ring on the Sm site of the small nuclear RNA to form the core snRNP (Sm core). In the cytosol, the Sm proteins SNRPD1, SNRPD2, SNRPE, SNRPF and SNRPG (5Sm) are trapped in an inactive 6S pICln-Sm complex by the chaperone CLNS1A that controls the assembly of the core snRNP. To assemble core snRNPs, the SMN complex accepts the trapped 5Sm proteins from CLNS1A. Binding of snRNA inside 5Sm ultimately triggers eviction of the SMN complex, thereby allowing binding of SNRPD3 and SNRPB to complete assembly of the core snRNP. Within the SMN complex, GEMIN2 constrains the conformation of 5Sm, thereby promoting 5Sm binding to snRNA containing the snRNP code (a nonameric Sm site and a 3'-adjacent stem-loop), thus preventing progression of assembly until a cognate substrate is bound. Involved in adult motor function. In Drosophila melanogaster (Fruit fly), this protein is Gem-associated protein 2.